A 489-amino-acid chain; its full sequence is Ribulose bisphosphate carboxylase large chain 2 (489 aa).

Residues Asn128 and Thr178 each contribute to the substrate site. The Proton acceptor role is filled by Lys180. A substrate-binding site is contributed by Lys182. 3 residues coordinate Mg(2+): Lys206, Asp208, and Glu209. The residue at position 206 (Lys206) is an N6-carboxylysine. His298 acts as the Proton acceptor in catalysis. 3 residues coordinate substrate: Arg299, His331, and Ser383.

Belongs to the RuBisCO large chain family. Type I subfamily. Heterohexadecamer of 8 large chains and 8 small chains. It depends on Mg(2+) as a cofactor.

It carries out the reaction 2 (2R)-3-phosphoglycerate + 2 H(+) = D-ribulose 1,5-bisphosphate + CO2 + H2O. It catalyses the reaction D-ribulose 1,5-bisphosphate + O2 = 2-phosphoglycolate + (2R)-3-phosphoglycerate + 2 H(+). In terms of biological role, ruBisCO catalyzes two reactions: the carboxylation of D-ribulose 1,5-bisphosphate, the primary event in carbon dioxide fixation, as well as the oxidative fragmentation of the pentose substrate. Both reactions occur simultaneously and in competition at the same active site. The chain is Ribulose bisphosphate carboxylase large chain 2 from Nitrobacter winogradskyi (strain ATCC 25391 / DSM 10237 / CIP 104748 / NCIMB 11846 / Nb-255).